The chain runs to 65 residues: MPKMKTNRSAAKRFGKTGSGKFTRRRQNLRHILTKKSAKRTRRLGQGALVDSANVKAVSRLLPYA.

The segment at 1-28 (MPKMKTNRSAAKRFGKTGSGKFTRRRQN) is disordered.

This sequence belongs to the bacterial ribosomal protein bL35 family.

The chain is Large ribosomal subunit protein bL35 from Solidesulfovibrio magneticus (strain ATCC 700980 / DSM 13731 / RS-1) (Desulfovibrio magneticus).